The sequence spans 397 residues: Dual-specificity RNA methyltransferase RlmN (397 aa).

The active-site Proton acceptor is the Glu-120. Residues 126 to 369 enclose the Radical SAM core domain; it reads ETDRGTLCVS…VRTPRGRDIL (244 aa). A disulfide bridge connects residues Cys-133 and Cys-372. [4Fe-4S] cluster contacts are provided by Cys-140, Cys-144, and Cys-147. Residues 198-199, Ser-230, 252-254, and Asn-329 each bind S-adenosyl-L-methionine; these read GE and SLH. Cys-372 serves as the catalytic S-methylcysteine intermediate.

The protein belongs to the radical SAM superfamily. RlmN family. It depends on [4Fe-4S] cluster as a cofactor.

Its subcellular location is the cytoplasm. The enzyme catalyses adenosine(2503) in 23S rRNA + 2 reduced [2Fe-2S]-[ferredoxin] + 2 S-adenosyl-L-methionine = 2-methyladenosine(2503) in 23S rRNA + 5'-deoxyadenosine + L-methionine + 2 oxidized [2Fe-2S]-[ferredoxin] + S-adenosyl-L-homocysteine. The catalysed reaction is adenosine(37) in tRNA + 2 reduced [2Fe-2S]-[ferredoxin] + 2 S-adenosyl-L-methionine = 2-methyladenosine(37) in tRNA + 5'-deoxyadenosine + L-methionine + 2 oxidized [2Fe-2S]-[ferredoxin] + S-adenosyl-L-homocysteine. Its function is as follows. Specifically methylates position 2 of adenine 2503 in 23S rRNA and position 2 of adenine 37 in tRNAs. m2A2503 modification seems to play a crucial role in the proofreading step occurring at the peptidyl transferase center and thus would serve to optimize ribosomal fidelity. The polypeptide is Dual-specificity RNA methyltransferase RlmN (Nitrobacter winogradskyi (strain ATCC 25391 / DSM 10237 / CIP 104748 / NCIMB 11846 / Nb-255)).